A 770-amino-acid chain; its full sequence is Shutoff protein (770 aa).

2 disordered regions span residues 1–20 (MEED…PNSE) and 30–49 (EEEN…PEDG). Residues 10-19 (DSETLTTPNS) show a composition bias toward polar residues. Residues 248 to 312 (VMDQVLIKRA…AVLVTVELEC (65 aa)) are binding to host EIF4G. In terms of domain architecture, RRM spans 315 to 433 (RFFANPQTLR…ELWTSFDERT (119 aa)). Phosphotyrosine; by host occurs at positions 332 and 647. Residues 661–770 (LSAAASCRSQ…TATMFTESQP (110 aa)) are disordered. Over residues 726 to 739 (GGPRGRGGRNHRQR) the composition is skewed to basic residues. Over residues 742-755 (TIFQKTRSEPTSEN) the composition is skewed to polar residues.

It belongs to the adenoviridae shutoff protein family. Monomer. Interacts with hexon protein; this interaction allows chaperoning and trimerization of hexon proteins. Interacts (via N-terminus) with host initiation factor EIF4G (via C-terminus). Interacts (via RRM domain) with viral mRNAs that contain the tripartite leader; this interaction allows ribosome shunting and expression of viral late mRNAs. In terms of processing, might be cleaved by the viral protease. Phosphorylated. Tyrosine phosphorylation enhances preferential binding to tripartite leader mRNAs and allows ribosome shunting. Post-translationally, methylated. Asymmetric dimethylation by host PRMT1 of the Arg/Gly-rich region may regulate shutoff protein binding to hexon and promote the capsid assembly in the nucleus.

It is found in the host cytoplasm. Its function is as follows. Protein that inhibits host translation while promoting late viral translation by ribosome shunting. Blocks host cap-dependent translation by binding to eIF4G, displacing MKNK1 from cap initiation complexes and preventing EIF4E phosphorylation. Binds to the tripartite leader sequence of viral late mRNAs and recruits host eIF4G, PABPC1/poly-A binding protein and 40S ribosomes subunits on viral mRNAs, allowing ribosome shunting and efficient translation of late viral mRNAs even though conventional translation via ribosome scanning from the cap has been shut off in the host cell. During assembly, acts as a chaperone protein that helps hexon proteins assembly into trimers. In Human adenovirus F serotype 40 (HAdV-40), this protein is Shutoff protein.